The chain runs to 244 residues: Putative B3 domain-containing protein At2g31460 (244 aa).

The TF-B3 DNA-binding region spans 49-147; sequence SSMHMENSGF…PVHDGVNLSG (99 aa). Disordered stretches follow at residues 175 to 196 and 217 to 244; these read DGNLPQDSGHDGHNDNLPQDSV and DSQGYLPDEDEDFGFNDDGSIRDSGHYQ. Positions 235 to 244 are enriched in basic and acidic residues; that stretch reads GSIRDSGHYQ.

Its subcellular location is the nucleus. This is Putative B3 domain-containing protein At2g31460 from Arabidopsis thaliana (Mouse-ear cress).